The sequence spans 121 residues: Large ribosomal subunit protein uL22c (121 aa).

It belongs to the universal ribosomal protein uL22 family. In terms of assembly, part of the 50S ribosomal subunit.

The protein localises to the plastid. Its subcellular location is the chloroplast. In terms of biological role, this protein binds specifically to 23S rRNA. The globular domain of the protein is located near the polypeptide exit tunnel on the outside of the subunit, while an extended beta-hairpin is found that lines the wall of the exit tunnel in the center of the 70S ribosome. In Welwitschia mirabilis (Tree tumbo), this protein is Large ribosomal subunit protein uL22c (rpl22).